Reading from the N-terminus, the 514-residue chain is Serine/threonine protein phosphatase PstP (514 aa).

The Cytoplasmic portion of the chain corresponds to 1–302 (MARVTLVLRY…RPRWSGRRLA (302 aa)). Residues 9–238 (RYAARSDRGL…DNVTVVVADV (230 aa)) form the PPM-type phosphatase domain. 6 residues coordinate Mn(2+): Asp-38, Gly-39, Asp-118, Ser-160, Asp-191, and Asp-229. Residues 303 to 323 (FVVALVTVLMTAGLLIGRAII) form a helical membrane-spanning segment. Residues 324–514 (RSNYYVADYA…QPGIDCRAAA (191 aa)) lie on the Extracellular side of the membrane. A disordered region spans residues 420–514 (LLPPCPAPRA…QPGIDCRAAA (95 aa)). Residues 440 to 480 (TTSETTEPNVTSSPASPSPTTSASAPTGTTPAIPTSASPAA) are compositionally biased toward low complexity.

Mn(2+) serves as cofactor.

The protein localises to the cell membrane. The enzyme catalyses O-phospho-L-seryl-[protein] + H2O = L-seryl-[protein] + phosphate. The catalysed reaction is O-phospho-L-threonyl-[protein] + H2O = L-threonyl-[protein] + phosphate. In terms of biological role, plays an important role in regulating cell division and growth by reversible phosphorylation signaling. May play important roles in regulating cellular metabolism and signaling pathways, which could mediate the growth and development of the cell. Plays a role in establishing and maintaining infection. This chain is Serine/threonine protein phosphatase PstP (pstP), found in Mycobacterium tuberculosis (strain CDC 1551 / Oshkosh).